The sequence spans 309 residues: Foldase protein PrsA 2 (309 aa).

An N-terminal signal peptide occupies residues 1 to 22 (MKQMNKLITGVVTLATVVTLSA). Cysteine 23 is lipidated: N-palmitoyl cysteine. Cysteine 23 carries the S-diacylglycerol cysteine lipid modification. Residues 146-241 (TPTMTAEIMQ…RTYHIIKVTK (96 aa)) form the PpiC domain.

This sequence belongs to the PrsA family.

It localises to the cell membrane. The catalysed reaction is [protein]-peptidylproline (omega=180) = [protein]-peptidylproline (omega=0). Its function is as follows. Plays a major role in protein secretion by helping the post-translocational extracellular folding of several secreted proteins. In Streptococcus pyogenes serotype M3 (strain ATCC BAA-595 / MGAS315), this protein is Foldase protein PrsA 2 (prsA2).